Reading from the N-terminus, the 195-residue chain is Glutamyl-tRNA(Gln) amidotransferase subunit C, mitochondrial (195 aa).

The N-terminal 18 residues, 1-18, are a transit peptide targeting the mitochondrion; it reads MNLSTIGFQVIFKQRLRC.

The protein belongs to the GatC family. In terms of assembly, subunit of the heterotrimeric GatCAB amidotransferase (AdT) complex, composed of A, B and C subunits.

Its subcellular location is the mitochondrion. It catalyses the reaction L-glutamyl-tRNA(Gln) + L-glutamine + ATP + H2O = L-glutaminyl-tRNA(Gln) + L-glutamate + ADP + phosphate + H(+). In terms of biological role, allows the formation of correctly charged Gln-tRNA(Gln) through the transamidation of misacylated Glu-tRNA(Gln) in the mitochondria. The reaction takes place in the presence of glutamine and ATP through an activated gamma-phospho-Glu-tRNA(Gln). This Brugia malayi (Filarial nematode worm) protein is Glutamyl-tRNA(Gln) amidotransferase subunit C, mitochondrial.